We begin with the raw amino-acid sequence, 137 residues long: uncharacterized protein (137 aa).

A disordered region spans residues Lys-67–Ser-87. The segment covering Arg-70 to Arg-85 has biased composition (basic and acidic residues).

This is an uncharacterized protein from Human cytomegalovirus (strain AD169) (HHV-5).